The following is a 298-amino-acid chain: Transcription factor RHD6 (298 aa).

Disordered stretches follow at residues 1–58 and 157–213; these read MALV…SDHQ and TGSR…AKNR. Residues 15–27 are compositionally biased toward low complexity; that stretch reads SKQNSSSSEDLSS. Composition is skewed to polar residues over residues 157–168 and 177–190; these read TGSRNESLSPKS and GEST…SSGV. A compositionally biased stretch (low complexity) spans 191–205; that stretch reads TGKTKPKPTTSPKDP. The interval 201-214 is basic motif; sequence SPKDPQSLAAKNRR. One can recognise a bHLH domain in the interval 201-250; sequence SPKDPQSLAAKNRRERISERLKILQELVPNGTKVDLVTMLEKAISYVKFL. Positions 215–250 are helix-loop-helix motif; the sequence is ERISERLKILQELVPNGTKVDLVTMLEKAISYVKFL.

As to quaternary structure, homodimer. Forms heterodimers with RSL1. Interacts with TIFY10B/JAZ2, TIFY6A/JAZ4, TIFY5A/JAZ8, TIFY7/JAZ9 and TIFY9/JAZ10. In terms of tissue distribution, expressed constitutively in flowers. Expressed in root epidermal hair cells.

It localises to the nucleus. In terms of biological role, transcription factor that is specifically required for the development of root hairs. Acts with RSL1 to positively regulate root hair development. Acts downstream of genes that regulate epidermal pattern formation, such as GL2. Targets directly RSL4, another transcription factor involved in the regulation of root hair elongation. Acts with RSL1 as transcription factor that integrates a jasmonate (JA) signaling pathway that stimulates root hair growth. This Arabidopsis thaliana (Mouse-ear cress) protein is Transcription factor RHD6.